We begin with the raw amino-acid sequence, 197 residues long: ATP-dependent Clp protease proteolytic subunit 1 (197 aa).

The active-site Nucleophile is the S96. H121 is a catalytic residue.

The protein belongs to the peptidase S14 family. In terms of assembly, fourteen ClpP subunits assemble into 2 heptameric rings which stack back to back to give a disk-like structure with a central cavity, resembling the structure of eukaryotic proteasomes.

The protein localises to the cytoplasm. The enzyme catalyses Hydrolysis of proteins to small peptides in the presence of ATP and magnesium. alpha-casein is the usual test substrate. In the absence of ATP, only oligopeptides shorter than five residues are hydrolyzed (such as succinyl-Leu-Tyr-|-NHMec, and Leu-Tyr-Leu-|-Tyr-Trp, in which cleavage of the -Tyr-|-Leu- and -Tyr-|-Trp bonds also occurs).. In terms of biological role, cleaves peptides in various proteins in a process that requires ATP hydrolysis. Has a chymotrypsin-like activity. Plays a major role in the degradation of misfolded proteins. This is ATP-dependent Clp protease proteolytic subunit 1 from Synechococcus sp. (strain ATCC 27144 / PCC 6301 / SAUG 1402/1) (Anacystis nidulans).